We begin with the raw amino-acid sequence, 175 residues long: NADH-ubiquinone oxidoreductase chain 6 (175 aa).

5 helical membrane-spanning segments follow: residues 1 to 21 (MMYT…GVSS), 24 to 44 (SPVY…GIVV), 46 to 66 (FGGS…MMVV), 86 to 106 (IVVL…VVYL), and 149 to 169 (YGCW…FIVI).

It belongs to the complex I subunit 6 family. Core subunit of respiratory chain NADH dehydrogenase (Complex I) which is composed of 45 different subunits.

It localises to the mitochondrion inner membrane. It catalyses the reaction a ubiquinone + NADH + 5 H(+)(in) = a ubiquinol + NAD(+) + 4 H(+)(out). Core subunit of the mitochondrial membrane respiratory chain NADH dehydrogenase (Complex I) which catalyzes electron transfer from NADH through the respiratory chain, using ubiquinone as an electron acceptor. Essential for the catalytic activity and assembly of complex I. The chain is NADH-ubiquinone oxidoreductase chain 6 (MT-ND6) from Dugong dugon (Dugong).